A 375-amino-acid polypeptide reads, in one-letter code: Lipid-A-disaccharide synthase (375 aa).

This sequence belongs to the LpxB family.

It carries out the reaction a lipid X + a UDP-2-N,3-O-bis[(3R)-3-hydroxyacyl]-alpha-D-glucosamine = a lipid A disaccharide + UDP + H(+). It participates in bacterial outer membrane biogenesis; LPS lipid A biosynthesis. Condensation of UDP-2,3-diacylglucosamine and 2,3-diacylglucosamine-1-phosphate to form lipid A disaccharide, a precursor of lipid A, a phosphorylated glycolipid that anchors the lipopolysaccharide to the outer membrane of the cell. The sequence is that of Lipid-A-disaccharide synthase from Pseudomonas putida (strain GB-1).